The primary structure comprises 290 residues: Alpha-mannosidase (290 aa).

Catalysis depends on Asp-17, which acts as the Nucleophile. A glycan (N-linked (GlcNAc...) asparagine) is linked at Asn-64.

It belongs to the glycosyl hydrolase 38 family. In terms of assembly, dimer. It depends on Zn(2+) as a cofactor.

The catalysed reaction is Hydrolysis of terminal, non-reducing alpha-D-mannose residues in alpha-D-mannosides.. Inhibited by swainsonine but not by 1-desoxymannojirimycin. In terms of biological role, liberates mannose from p-nitrophenyl-alpha-D-mannoside. In Lablab purpureus (Hyacinth bean), this protein is Alpha-mannosidase.